Reading from the N-terminus, the 452-residue chain is Pup--protein ligase (452 aa).

Glu9 serves as a coordination point for Mg(2+). Residue Arg53 participates in ATP binding. Tyr55 lines the Mg(2+) pocket. The Proton acceptor role is filled by Asp57. Position 63 (Glu63) interacts with Mg(2+). Positions 66 and 419 each coordinate ATP.

This sequence belongs to the Pup ligase/Pup deamidase family. Pup-conjugating enzyme subfamily.

It carries out the reaction ATP + [prokaryotic ubiquitin-like protein]-L-glutamate + [protein]-L-lysine = ADP + phosphate + N(6)-([prokaryotic ubiquitin-like protein]-gamma-L-glutamyl)-[protein]-L-lysine.. It functions in the pathway protein degradation; proteasomal Pup-dependent pathway. It participates in protein modification; protein pupylation. In terms of biological role, catalyzes the covalent attachment of the prokaryotic ubiquitin-like protein modifier Pup to the proteasomal substrate proteins, thereby targeting them for proteasomal degradation. This tagging system is termed pupylation. The ligation reaction involves the side-chain carboxylate of the C-terminal glutamate of Pup and the side-chain amino group of a substrate lysine. The protein is Pup--protein ligase of Frankia alni (strain DSM 45986 / CECT 9034 / ACN14a).